A 145-amino-acid chain; its full sequence is uncharacterized protein (145 aa).

This is an uncharacterized protein from Bacillus anthracis.